A 231-amino-acid chain; its full sequence is uncharacterized protein (231 aa).

Transmembrane regions (helical) follow at residues 36–56 (SLLA…SFFI), 58–78 (SQVT…ALQW), 83–103 (APLN…TLTP), 143–163 (FTVM…ASLL), and 170–190 (SIVN…YILY).

The protein belongs to the BI1 family.

It is found in the cell membrane. This is an uncharacterized protein from Campylobacter jejuni subsp. jejuni serotype O:2 (strain ATCC 700819 / NCTC 11168).